We begin with the raw amino-acid sequence, 123 residues long: Small ribosomal subunit protein uS12 (123 aa).

The residue at position 89 (Asp-89) is a 3-methylthioaspartic acid.

This sequence belongs to the universal ribosomal protein uS12 family. As to quaternary structure, part of the 30S ribosomal subunit. Contacts proteins S8 and S17. May interact with IF1 in the 30S initiation complex.

Its function is as follows. With S4 and S5 plays an important role in translational accuracy. In terms of biological role, interacts with and stabilizes bases of the 16S rRNA that are involved in tRNA selection in the A site and with the mRNA backbone. Located at the interface of the 30S and 50S subunits, it traverses the body of the 30S subunit contacting proteins on the other side and probably holding the rRNA structure together. The combined cluster of proteins S8, S12 and S17 appears to hold together the shoulder and platform of the 30S subunit. The polypeptide is Small ribosomal subunit protein uS12 (Nitrobacter winogradskyi (strain ATCC 25391 / DSM 10237 / CIP 104748 / NCIMB 11846 / Nb-255)).